Consider the following 314-residue polypeptide: Secreted frizzled-related protein 5 (314 aa).

The N-terminal stretch at 1–21 (MWVAWSARTAALALLLGALHG) is a signal peptide. The FZ domain maps to 45 to 162 (SKPPQCLDIP…PLDNDLCIAV (118 aa)). 8 cysteine pairs are disulfide-bonded: C50-C113, C60-C106, C97-C132, C121-C159, C125-C149, C178-C250, C181-C252, and C195-C300. The region spanning 178–300 (CAQCEMEHSA…AVKFMFSYPC (123 aa)) is the NTR domain.

This sequence belongs to the secreted frizzled-related protein (sFRP) family.

It localises to the secreted. In terms of biological role, soluble frizzled-related proteins (sFRPS) function as modulators of Wnt signaling through direct interaction with Wnts. They have a role in regulating cell growth and differentiation in specific cell types. SFRP5 may be involved in determining the polarity of photoreceptor, and perhaps, other cells in the retina. The sequence is that of Secreted frizzled-related protein 5 (Sfrp5) from Mus musculus (Mouse).